Consider the following 614-residue polypeptide: Leucine-rich repeat and immunoglobulin-like domain-containing nogo receptor-interacting protein 1 (614 aa).

Positions 1 to 35 (MLAGGVRSMPSPLLACWQPILLLVLGSVLSGSATG) are cleaved as a signal peptide. 2 disulfide bridges follow: C36/C42 and C40/C51. Residues 36–65 (CPPRCECSAQDRAVLCHRKRFVAVPEGIPT) form the LRRNT domain. The Extracellular portion of the chain corresponds to 36-555 (CPPRCECSAQ…FDIKTLIIAT (520 aa)). LRR repeat units follow at residues 66–87 (ETRL…EFAS), 90–111 (HLEE…AFNN), 114–135 (NLRT…VFTG), 138–159 (NLTK…MFQD), 162–183 (NLKS…AFSG), 186–207 (SLEQ…ALSH), 210–231 (GLIV…SFKR), 258–279 (NLTS…AVRH), 282–303 (YLRF…MLHE), 306–327 (RLQE…AFRG), and 330–351 (YLRV…VFHS). The N-linked (GlcNAc...) asparagine glycan is linked to N138. N196 is a glycosylation site (N-linked (GlcNAc...) asparagine). N-linked (GlcNAc...) asparagine glycosylation is found at N258, N268, and N287. The N-linked (GlcNAc...) asparagine glycan is linked to N335. Residues 363–417 (NPLACDCRLLWVFRRRWRLNFNRQQPTCATPEFVQGKEFKDFPDVLLPNYFTCRR) form the LRRCT domain. 3 disulfide bridges follow: C367/C390, C369/C415, and C440/C491. The 103-residue stretch at 405 to 507 (PDVLLPNYFT…GNDSMPAHLH (103 aa)) folds into the Ig-like C2-type domain. Residues N486, N499, N520, and N536 are each glycosylated (N-linked (GlcNAc...) asparagine). A helical membrane pass occupies residues 556–576 (TMGFISFLGVVLFCLVLLFLW). At 577–614 (SRGKGNTKHNIEIEYVPRKSDAGISSADAPRKFNMKMI) the chain is on the cytoplasmic side. The residue at position 596 (S596) is a Phosphoserine.

Homotetramer. Forms a ternary complex with RTN4R/NGFR and RTN4R/TNFRSF19. Interacts with NGRF, RTN4R and MYT1L. In terms of processing, N-glycosylated. Contains predominantly high-mannose glycans.

Its subcellular location is the cell membrane. Functional component of the Nogo receptor signaling complex (RTN4R/NGFR) in RhoA activation responsible for some inhibition of axonal regeneration by myelin-associated factors. Is also an important negative regulator of oligodentrocyte differentiation and axonal myelination. Acts in conjunction with RTN4 and RTN4R in regulating neuronal precursor cell motility during cortical development. The chain is Leucine-rich repeat and immunoglobulin-like domain-containing nogo receptor-interacting protein 1 (LINGO1) from Pongo abelii (Sumatran orangutan).